A 67-amino-acid chain; its full sequence is uncharacterized protein (67 aa).

The next 2 helical transmembrane spans lie at 10–32 (NLSHVLALFLVSFILMAPYTAFI) and 44–66 (ATLTGIVAGILSNPGLFAYMGQW).

Its subcellular location is the cell membrane. This is an uncharacterized protein from Archaeoglobus fulgidus (strain ATCC 49558 / DSM 4304 / JCM 9628 / NBRC 100126 / VC-16).